The primary structure comprises 513 residues: GMP synthase [glutamine-hydrolyzing] (513 aa).

Positions 8–198 (KIIVLDYGSQ…ALNICGAKGN (191 aa)) constitute a Glutamine amidotransferase type-1 domain. C85 acts as the Nucleophile in catalysis. Catalysis depends on residues H172 and E174. The GMPS ATP-PPase domain occupies 199-388 (WSMENFIDMQ…LGMPDEIVWR (190 aa)). 226–232 (SGGVDSS) serves as a coordination point for ATP.

As to quaternary structure, homodimer.

The catalysed reaction is XMP + L-glutamine + ATP + H2O = GMP + L-glutamate + AMP + diphosphate + 2 H(+). The protein operates within purine metabolism; GMP biosynthesis; GMP from XMP (L-Gln route): step 1/1. Functionally, catalyzes the synthesis of GMP from XMP. This is GMP synthase [glutamine-hydrolyzing] (guaA) from Lactococcus lactis subsp. lactis (strain IL1403) (Streptococcus lactis).